The primary structure comprises 204 residues: Small ribosomal subunit protein uS4 (204 aa).

The tract at residues Ser-25–Tyr-47 is disordered. The region spanning Arg-93 to Ala-156 is the S4 RNA-binding domain.

It belongs to the universal ribosomal protein uS4 family. In terms of assembly, part of the 30S ribosomal subunit. Contacts protein S5. The interaction surface between S4 and S5 is involved in control of translational fidelity.

One of the primary rRNA binding proteins, it binds directly to 16S rRNA where it nucleates assembly of the body of the 30S subunit. In terms of biological role, with S5 and S12 plays an important role in translational accuracy. This is Small ribosomal subunit protein uS4 from Rhodospirillum centenum (strain ATCC 51521 / SW).